A 277-amino-acid polypeptide reads, in one-letter code: MAVKGFRPTTPTRREMTMCTFEEITTSTPEKSLLVSLKKSGGRNANGKITVRHIGGGAKRKYRIIDFKRNKDNIPAKVVSIEYDPNRTAFIALVVYADGEKRYIIAPVGLKVGDTVVSGPESDIKVGNCLPIRNIPVGTVIHNIELAAGKGAQLVRSAGNSAQLMAKEGDYSQVRLPSGEVRYIRVECRATIGVVSNQTSEIVNIGKAGRKRHMGVRPTVRGSVMNPNDHPHGGGEGRSPIGHPSPRTPWGKPALGYKTRKNKKYSDRFIVKRRHDK.

The segment at 219–277 is disordered; the sequence is TVRGSVMNPNDHPHGGGEGRSPIGHPSPRTPWGKPALGYKTRKNKKYSDRFIVKRRHDK.

The protein belongs to the universal ribosomal protein uL2 family. As to quaternary structure, part of the 50S ribosomal subunit. Forms a bridge to the 30S subunit in the 70S ribosome.

Its function is as follows. One of the primary rRNA binding proteins. Required for association of the 30S and 50S subunits to form the 70S ribosome, for tRNA binding and peptide bond formation. It has been suggested to have peptidyltransferase activity; this is somewhat controversial. Makes several contacts with the 16S rRNA in the 70S ribosome. The polypeptide is Large ribosomal subunit protein uL2 (Clostridium botulinum (strain ATCC 19397 / Type A)).